A 219-amino-acid chain; its full sequence is Germin-like protein subfamily 2 member 1 (219 aa).

Positions 1-21 (MASPTLTLLLLLTTVSFFISS) are cleaved as a signal peptide. C32 and C47 are joined by a disulfide. The Cupin type-1 domain occupies 61 to 209 (QGLAKPGLTN…AFQTSPGTVK (149 aa)). N70 carries N-linked (GlcNAc...) asparagine glycosylation. H109, H111, E116, and H155 together coordinate Mn(2+).

Belongs to the germin family. Oligomer (believed to be a pentamer but probably hexamer).

The protein resides in the secreted. Its subcellular location is the extracellular space. It localises to the apoplast. May play a role in plant defense. Probably has no oxalate oxidase activity even if the active site is conserved. The protein is Germin-like protein subfamily 2 member 1 (GLP4) of Arabidopsis thaliana (Mouse-ear cress).